The primary structure comprises 148 residues: SsrA-binding protein (148 aa).

The segment at 119–148 is disordered; that stretch reads AKGKKQHDKRQSMKEADWKREKQRLIKHTR. A compositionally biased stretch (basic and acidic residues) spans 127–142; the sequence is KRQSMKEADWKREKQR.

It belongs to the SmpB family.

The protein resides in the cytoplasm. Its function is as follows. Required for rescue of stalled ribosomes mediated by trans-translation. Binds to transfer-messenger RNA (tmRNA), required for stable association of tmRNA with ribosomes. tmRNA and SmpB together mimic tRNA shape, replacing the anticodon stem-loop with SmpB. tmRNA is encoded by the ssrA gene; the 2 termini fold to resemble tRNA(Ala) and it encodes a 'tag peptide', a short internal open reading frame. During trans-translation Ala-aminoacylated tmRNA acts like a tRNA, entering the A-site of stalled ribosomes, displacing the stalled mRNA. The ribosome then switches to translate the ORF on the tmRNA; the nascent peptide is terminated with the 'tag peptide' encoded by the tmRNA and targeted for degradation. The ribosome is freed to recommence translation, which seems to be the essential function of trans-translation. The chain is SsrA-binding protein from Neisseria gonorrhoeae (strain ATCC 700825 / FA 1090).